The sequence spans 618 residues: 1-deoxy-D-xylulose-5-phosphate synthase (618 aa).

Residues His73 and 114–116 contribute to the thiamine diphosphate site; that span reads GHS. Mg(2+) is bound at residue Asp145. Residues 146 to 147, Asn174, Tyr284, and Glu364 each bind thiamine diphosphate; that span reads GA. Mg(2+) is bound at residue Asn174.

This sequence belongs to the transketolase family. DXPS subfamily. Homodimer. Mg(2+) serves as cofactor. Requires thiamine diphosphate as cofactor.

The catalysed reaction is D-glyceraldehyde 3-phosphate + pyruvate + H(+) = 1-deoxy-D-xylulose 5-phosphate + CO2. Its pathway is metabolic intermediate biosynthesis; 1-deoxy-D-xylulose 5-phosphate biosynthesis; 1-deoxy-D-xylulose 5-phosphate from D-glyceraldehyde 3-phosphate and pyruvate: step 1/1. Catalyzes the acyloin condensation reaction between C atoms 2 and 3 of pyruvate and glyceraldehyde 3-phosphate to yield 1-deoxy-D-xylulose-5-phosphate (DXP). This is 1-deoxy-D-xylulose-5-phosphate synthase from Clostridium beijerinckii (strain ATCC 51743 / NCIMB 8052) (Clostridium acetobutylicum).